The chain runs to 256 residues: Ethylene-responsive transcription factor ERF084 (256 aa).

Residues 115 to 172 (GFMGVRKRPWGRWSAEIRDRIGRCRHWLGTFDTAEEAARAYDAAARRLRGTKAKTNFV) constitute a DNA-binding region (AP2/ERF).

The protein belongs to the AP2/ERF transcription factor family. ERF subfamily.

Its subcellular location is the nucleus. Probably acts as a transcriptional activator. Binds to the GCC-box pathogenesis-related promoter element. May be involved in the regulation of gene expression by stress factors and by components of stress signal transduction pathways. This is Ethylene-responsive transcription factor ERF084 (ERF084) from Arabidopsis thaliana (Mouse-ear cress).